Here is a 275-residue protein sequence, read N- to C-terminus: Lectin (275 aa).

The first 30 residues, 1–30 (MASLQTQMISFYLIFLSILLTTIFFFKVNS), serve as a signal peptide directing secretion. Positions 111 and 129 each coordinate D-glucose. Mn(2+)-binding residues include E149 and D151. Residues D151, F153, N155, and D159 each coordinate Ca(2+). Mn(2+)-binding residues include D159 and H166. Residues 211–217 (NSLEEEN) constitute a propeptide that is removed on maturation. Residues G246 and A247 each coordinate D-glucose. Positions 270–275 (KQAADA) are excised as a propeptide.

The protein belongs to the leguminous lectin family. Heterotetramer of two alpha and two beta chains. In terms of processing, the mature form consists of two chains, alpha and beta, produced by cleavage of the immature protein. These remain cleaved, yet fold together to form one subunit.

D-mannose specific lectin. This is Lectin from Lens culinaris subsp. orientalis (Oriental wild lentil).